A 397-amino-acid polypeptide reads, in one-letter code: Glutamate 5-kinase (397 aa).

The tract at residues 1–28 is disordered; that stretch reads MVADLTSDISESQEQETETNSANNNGAV. Lysine 40 serves as a coordination point for ATP. 3 residues coordinate substrate: serine 80, aspartate 168, and asparagine 180. Residues 200–201 and 243–249 contribute to the ATP site; these read SD and SGGMASK. The 78-residue stretch at 306–383 folds into the PUA domain; the sequence is HGQVYIDQGA…QEIADILGYE (78 aa).

The protein belongs to the glutamate 5-kinase family.

It is found in the cytoplasm. It carries out the reaction L-glutamate + ATP = L-glutamyl 5-phosphate + ADP. It functions in the pathway amino-acid biosynthesis; L-proline biosynthesis; L-glutamate 5-semialdehyde from L-glutamate: step 1/2. Catalyzes the transfer of a phosphate group to glutamate to form L-glutamate 5-phosphate. The polypeptide is Glutamate 5-kinase (Zymomonas mobilis subsp. mobilis (strain ATCC 31821 / ZM4 / CP4)).